The sequence spans 279 residues: Membrane protein insertase YidC (279 aa).

An N-terminal signal peptide occupies residues 1–22 (MKHLKRNMALLSVAALSFILTA). Cys-23 carries the N-palmitoyl cysteine lipid modification. Cys-23 carries the S-diacylglycerol cysteine lipid modification. 5 helical membrane passes run 35-55 (IWDGVIVYNFSRFIIYLSKLF), 59-79 (YGWGIIVFTIIIRIIILPLMI), 129-149 (MAGCLPLIIQLPVMYALYAAV), 170-190 (PYFILPILAALFTFMSTWLSM), and 210-230 (PLVILITALNFPAAITLYWVV). Basic and acidic residues predominate over residues 253–268 (EEKIQTEKAKRKAIEK). Positions 253-279 (EEKIQTEKAKRKAIEKAKRRAMKSKRK) are disordered. Residues 269–279 (AKRRAMKSKRK) are compositionally biased toward basic residues.

Belongs to the OXA1/ALB3/YidC family. Type 2 subfamily.

The protein localises to the cell membrane. Its function is as follows. Required for the insertion and/or proper folding and/or complex formation of integral membrane proteins into the membrane. Involved in integration of membrane proteins that insert both dependently and independently of the Sec translocase complex, as well as at least some lipoproteins. The chain is Membrane protein insertase YidC from Pediococcus pentosaceus (strain ATCC 25745 / CCUG 21536 / LMG 10740 / 183-1w).